The following is a 51-amino-acid chain: Insulin (51 aa).

Cystine bridges form between C7/C37, C19/C50, and C36/C41.

This sequence belongs to the insulin family. Heterodimer of a B chain and an A chain linked by two disulfide bonds.

Its subcellular location is the secreted. Insulin decreases blood glucose concentration. It increases cell permeability to monosaccharides, amino acids and fatty acids. It accelerates glycolysis, the pentose phosphate cycle, and glycogen synthesis in liver. The polypeptide is Insulin (INS) (Balaenoptera borealis (Sei whale)).